Consider the following 113-residue polypeptide: Large ribosomal subunit protein uL24 (113 aa).

The protein belongs to the universal ribosomal protein uL24 family. Part of the 50S ribosomal subunit.

In terms of biological role, one of two assembly initiator proteins, it binds directly to the 5'-end of the 23S rRNA, where it nucleates assembly of the 50S subunit. One of the proteins that surrounds the polypeptide exit tunnel on the outside of the subunit. In Rickettsia prowazekii (strain Madrid E), this protein is Large ribosomal subunit protein uL24.